The following is a 63-amino-acid chain: Large ribosomal subunit protein bL32 (63 aa).

The protein belongs to the bacterial ribosomal protein bL32 family.

The chain is Large ribosomal subunit protein bL32 from Lacticaseibacillus paracasei (strain ATCC 334 / BCRC 17002 / CCUG 31169 / CIP 107868 / KCTC 3260 / NRRL B-441) (Lactobacillus paracasei).